We begin with the raw amino-acid sequence, 102 residues long: Mitochondrial import inner membrane translocase subunit TIM10 (102 aa).

Positions 42–72 (CHTKCISSTPLNHRYAEGDLLKGESVCIDRC) match the Twin CX3C motif motif. 2 cysteine pairs are disulfide-bonded: Cys42–Cys72 and Cys46–Cys68.

It belongs to the small Tim family. In terms of assembly, heterohexamer; composed of 3 copies of TIM9 and 3 copies of TIM10, named soluble 70 kDa complex. Associates directly with the TIM22 complex, whose core is composed of TIM22 and TIM54. Interacts with the transmembrane regions of multi-pass transmembrane proteins in transit.

It localises to the mitochondrion inner membrane. Mitochondrial intermembrane chaperone that participates in the import and insertion of multi-pass transmembrane proteins into the mitochondrial inner membrane. Also required for the transfer of beta-barrel precursors from the TOM complex to the sorting and assembly machinery (SAM complex) of the outer membrane. Acts as a chaperone-like protein that protects the hydrophobic precursors from aggregation and guide them through the mitochondrial intermembrane space. This chain is Mitochondrial import inner membrane translocase subunit TIM10 (TIM10), found in Cryptococcus neoformans var. neoformans serotype D (strain B-3501A) (Filobasidiella neoformans).